Consider the following 51-residue polypeptide: Large ribosomal subunit protein bL33 (51 aa).

Belongs to the bacterial ribosomal protein bL33 family.

In Acinetobacter baylyi (strain ATCC 33305 / BD413 / ADP1), this protein is Large ribosomal subunit protein bL33.